The primary structure comprises 163 residues: Aspartate carbamoyltransferase regulatory chain (163 aa).

The Zn(2+) site is built by Cys113, Cys118, Cys143, and Cys146.

It belongs to the PyrI family. As to quaternary structure, contains catalytic and regulatory chains. The cofactor is Zn(2+).

In terms of biological role, involved in allosteric regulation of aspartate carbamoyltransferase. The polypeptide is Aspartate carbamoyltransferase regulatory chain (Caldivirga maquilingensis (strain ATCC 700844 / DSM 13496 / JCM 10307 / IC-167)).